Reading from the N-terminus, the 352-residue chain is S-adenosylmethionine:tRNA ribosyltransferase-isomerase (352 aa).

Belongs to the QueA family. In terms of assembly, monomer.

The protein localises to the cytoplasm. The enzyme catalyses 7-aminomethyl-7-carbaguanosine(34) in tRNA + S-adenosyl-L-methionine = epoxyqueuosine(34) in tRNA + adenine + L-methionine + 2 H(+). It participates in tRNA modification; tRNA-queuosine biosynthesis. Transfers and isomerizes the ribose moiety from AdoMet to the 7-aminomethyl group of 7-deazaguanine (preQ1-tRNA) to give epoxyqueuosine (oQ-tRNA). This chain is S-adenosylmethionine:tRNA ribosyltransferase-isomerase, found in Syntrophomonas wolfei subsp. wolfei (strain DSM 2245B / Goettingen).